Consider the following 154-residue polypeptide: Transcriptional repressor NrdR (154 aa).

A zinc finger spans residues 3–34 (CPFCGANDTKVIDSRLVAEGEQVRRRRECVAC). Positions 49 to 139 (PRLIKQDGTR…VYRRFQDLDE (91 aa)) constitute an ATP-cone domain.

This sequence belongs to the NrdR family. Requires Zn(2+) as cofactor.

Negatively regulates transcription of bacterial ribonucleotide reductase nrd genes and operons by binding to NrdR-boxes. The polypeptide is Transcriptional repressor NrdR (Pseudomonas putida (strain ATCC 700007 / DSM 6899 / JCM 31910 / BCRC 17059 / LMG 24140 / F1)).